A 317-amino-acid polypeptide reads, in one-letter code: Movement protein (317 aa).

Residues 223-317 (ETGSIRGIAP…RVTDPNPERL (95 aa)) form a disordered region. A compositionally biased stretch (low complexity) spans 255-276 (SKTTKLPSLEPSSGSSSGLSMS). Basic and acidic residues predominate over residues 302–317 (HLSDKGRVTDPNPERL).

Interacts with host glyceraldehyde 3-phosphate dehydrogenase-A/NbGAPDH-A; this interaction plays a positive role in cell-to-cell movement of the virus.

Its subcellular location is the host cell wall. The protein resides in the host endoplasmic reticulum membrane. Plays an essential role in cell-to-cell movement and long-distance transport of the viral genome. Mechanistically, movement protein is recruited by viral replicase complexes formed on RNA1 to punctate structures on the host cortical endoplasmic reticulum. In turn, interacts with the viral genome and mediates virion movement from cell to cell. Also acts as a suppressor of RNA-mediated gene silencing, also known as post-transcriptional gene silencing (PTGS), a mechanism of plant viral defense that limits the accumulation of viral RNAs. In Red clover necrotic mosaic virus (RCNMV), this protein is Movement protein.